A 341-amino-acid polypeptide reads, in one-letter code: 5-formaminoimidazole-4-carboxamide-1-(beta)-D-ribofuranosyl 5'-monophosphate synthetase (341 aa).

5-amino-1-(5-phospho-beta-D-ribosyl)imidazole-4-carboxamide is bound by residues histidine 10 and threonine 77. Residues 106–317 (DRSLKERLMR…YYGLLFDEPI (212 aa)) form the ATP-grasp domain. Residues 132–188 (DTLV…VLAY) and glutamate 210 each bind ATP. Asparagine 238 lines the 5-amino-1-(5-phospho-beta-D-ribosyl)imidazole-4-carboxamide pocket. Residues glutamate 277 and glutamate 290 each coordinate Mg(2+).

The protein belongs to the phosphohexose mutase family. Mg(2+) is required as a cofactor. It depends on Mn(2+) as a cofactor.

It carries out the reaction 5-amino-1-(5-phospho-beta-D-ribosyl)imidazole-4-carboxamide + formate + ATP = 5-formamido-1-(5-phospho-D-ribosyl)imidazole-4-carboxamide + ADP + phosphate. It functions in the pathway purine metabolism; IMP biosynthesis via de novo pathway; 5-formamido-1-(5-phospho-D-ribosyl)imidazole-4-carboxamide from 5-amino-1-(5-phospho-D-ribosyl)imidazole-4-carboxamide (formate route): step 1/1. In terms of biological role, catalyzes the ATP- and formate-dependent formylation of 5-aminoimidazole-4-carboxamide-1-beta-d-ribofuranosyl 5'-monophosphate (AICAR) to 5-formaminoimidazole-4-carboxamide-1-beta-d-ribofuranosyl 5'-monophosphate (FAICAR) in the absence of folates. This is 5-formaminoimidazole-4-carboxamide-1-(beta)-D-ribofuranosyl 5'-monophosphate synthetase from Cenarchaeum symbiosum (strain A).